The following is a 594-amino-acid chain: Alanine--tRNA ligase (594 aa).

Zn(2+) is bound by residues His456, His460, Cys558, and His562.

This sequence belongs to the class-II aminoacyl-tRNA synthetase family. It depends on Zn(2+) as a cofactor.

It localises to the cytoplasm. The enzyme catalyses tRNA(Ala) + L-alanine + ATP = L-alanyl-tRNA(Ala) + AMP + diphosphate. In terms of biological role, catalyzes the attachment of alanine to tRNA(Ala) in a two-step reaction: alanine is first activated by ATP to form Ala-AMP and then transferred to the acceptor end of tRNA(Ala). Also edits incorrectly charged Ser-tRNA(Ala) and Gly-tRNA(Ala) via its editing domain. This is Alanine--tRNA ligase (alaS) from Borreliella burgdorferi (strain ATCC 35210 / DSM 4680 / CIP 102532 / B31) (Borrelia burgdorferi).